A 315-amino-acid chain; its full sequence is Methionyl-tRNA formyltransferase (315 aa).

Positions 2-189 (SESLRIIFAG…LITTLKQLAD (188 aa)) are N-terminal domain. (6S)-5,6,7,8-tetrahydrofolate is bound at residue 113 to 116 (SLLP). The segment at 210–315 (KEEARIDWSL…EWFVPGNRLV (106 aa)) is C-terminal domain.

The protein belongs to the Fmt family.

It catalyses the reaction L-methionyl-tRNA(fMet) + (6R)-10-formyltetrahydrofolate = N-formyl-L-methionyl-tRNA(fMet) + (6S)-5,6,7,8-tetrahydrofolate + H(+). In terms of biological role, attaches a formyl group to the free amino group of methionyl-tRNA(fMet). The formyl group appears to play a dual role in the initiator identity of N-formylmethionyl-tRNA by promoting its recognition by IF2 and preventing the misappropriation of this tRNA by the elongation apparatus. The polypeptide is Methionyl-tRNA formyltransferase (Escherichia coli O157:H7).